The primary structure comprises 231 residues: Somatolactin-2 (231 aa).

Positions 1-24 are cleaved as a signal peptide; it reads MRMMRAIKQGQWAILLWPYLLTTS. Cystine bridges form between Cys29–Cys39, Cys89–Cys205, and Cys222–Cys230. Asn145 carries an N-linked (GlcNAc...) asparagine glycan.

This sequence belongs to the somatotropin/prolactin family. As to expression, pituitary gland.

It is found in the secreted. This Sparus aurata (Gilthead sea bream) protein is Somatolactin-2.